A 352-amino-acid polypeptide reads, in one-letter code: Glycogen synthase kinase 3 (352 aa).

One can recognise a Protein kinase domain in the interval 20–310 (YTVERVAGQG…PLDALCHPFF (291 aa)). Residues 26 to 34 (AGQGTFGTV) and K49 contribute to the ATP site. The active-site Proton acceptor is D152.

Belongs to the protein kinase superfamily. CMGC Ser/Thr protein kinase family. GSK-3 subfamily. As to quaternary structure, inhibited by cyclin kinase 2 (CDK2) inhibitors, including GW8510.

The catalysed reaction is L-seryl-[tau protein] + ATP = O-phospho-L-seryl-[tau protein] + ADP + H(+). It carries out the reaction L-threonyl-[tau protein] + ATP = O-phospho-L-threonyl-[tau protein] + ADP + H(+). This is Glycogen synthase kinase 3 from Trypanosoma brucei brucei (strain 927/4 GUTat10.1).